The chain runs to 170 residues: CASP-like protein 1F1 (170 aa).

At 1-16 (MMGDNEGRRTPLLNLG) the chain is on the cytoplasmic side. Residues 17–37 (VQVSMRVLIIGAAMASMWVMI) form a helical membrane-spanning segment. Residues 38–62 (TNREVASVYGIAFEAKYSYSSAFRY) lie on the Extracellular side of the membrane. Residues 63 to 83 (LVYAQIAVCAATLFTLVWACL) form a helical membrane-spanning segment. Residues 84-88 (AVRRR) lie on the Cytoplasmic side of the membrane. The helical transmembrane segment at 89–109 (GLVFALFFFDLLTTLTAISAF) threads the bilayer. The Extracellular segment spans residues 110 to 141 (SAAFAEGYVGKYGNKQAGWLPICGYVHVYCSR). The helical transmembrane segment at 142–162 (VTISLAMSFASFVLLFILTVL) threads the bilayer. Residues 163 to 170 (TASSARHY) are Cytoplasmic-facing.

It belongs to the Casparian strip membrane proteins (CASP) family. Homodimer and heterodimers.

The protein localises to the cell membrane. This is CASP-like protein 1F1 from Arabidopsis lyrata subsp. lyrata (Lyre-leaved rock-cress).